A 603-amino-acid polypeptide reads, in one-letter code: Golgin subfamily A member 8B (603 aa).

Disordered regions lie at residues 1 to 82 (MAEE…NSRS), 95 to 125 (LKQQ…ELEG), 398 to 419 (TSAE…ESSG), and 460 to 492 (PGDS…GAAG). Residues 46–66 (AASGGCHSSEASSSASSSLHA) show a composition bias toward low complexity. Over residues 69-82 (SPCQEQAAVLNSRS) the composition is skewed to polar residues. Coiled coils occupy residues 82 to 173 (SIKI…GELE) and 212 to 440 (LKGH…LELG). Residues 100-124 (KQVEHQLEEEKKANNEKQKAERELE) show a composition bias toward basic and acidic residues. Residues 469 to 482 (PGGGHHQAGPGQGG) show a composition bias toward gly residues. Residues 491–603 (AGDGVAACGS…CWAWLPRRRR (113 aa)) are golgi-targeting domain.

Belongs to the GOLGA8 family. Highly expressed in brain, heart and kidney. Detected at lower levels in liver, thymus, spleen, lung and peripheral blood leukocytes.

Its subcellular location is the golgi apparatus. It is found in the golgi stack membrane. In terms of biological role, may be involved in maintaining Golgi structure. In Homo sapiens (Human), this protein is Golgin subfamily A member 8B (GOLGA8B).